We begin with the raw amino-acid sequence, 88 residues long: Monensin polyketide synthase acyl carrier protein (88 aa).

In terms of domain architecture, Carrier spans P5–L82. At S42 the chain carries O-(pantetheine 4'-phosphoryl)serine.

4'-phosphopantetheine is transferred from CoA to a specific serine of the apo-ACP-like protein.

Its pathway is antifungal biosynthesis; monensin biosynthesis. Its function is as follows. Acyl carrier protein. This Streptomyces virginiae (Streptomyces cinnamonensis) protein is Monensin polyketide synthase acyl carrier protein.